A 271-amino-acid polypeptide reads, in one-letter code: Insulin-like growth factor-binding protein 5 (271 aa).

The N-terminal stretch at 1-19 (MVLTAVLLLLAACAGPAQG) is a signal peptide. The 81-residue stretch at 22 to 102 (SFVHCEPCDE…LHGRGVCLNE (81 aa)) folds into the IGFBP N-terminal domain. 6 disulfides stabilise this stretch: C26/C52, C29/C54, C37/C55, C44/C58, C66/C79, and C73/C99. Over residues 109–121 (AKIERDSREHEEP) the composition is skewed to basic and acidic residues. The disordered stretch occupies residues 109 to 129 (AKIERDSREHEEPTTSEMAEE). S115 is subject to Phosphoserine. Residues 188–262 (QGPCRRHMEA…MEYVDGDFQC (75 aa)) form the Thyroglobulin type-1 domain. Intrachain disulfides connect C191-C218, C229-C240, and C242-C262.

Interacts with IGF1; this interaction enhances the growth stimulatory effects of IGF1 on fibroblasts. Interacts with CAV1; this interaction allows trafficking of IGFBP5 from the plasma membrane to the nucleus. Interacts with NCL; this interaction is necessary for IGFBP5 localization to the nucleus.

Its subcellular location is the secreted. It is found in the cytoplasm. The protein resides in the nucleus. Multifunctional protein that plays a critical role in regulating the availability of IGFs to their receptors and thereby regulates IGF-mediated cellular processes including proliferation, differentiation, and apoptosis in a cell-type specific manner. Increases the cell proliferation of osteoblasts, intestinal smooth muscle cells and neuroblastoma cells. Enhances adhesion and survival of epithelial cells but decreases adhesion of mesenchymal cells. Once secreted, acts as a major mediator of mTORC1-dependent feedback inhibition of IGF1 signaling. Also plays a role in the induction of extracellular matrix (ECM) production and deposition independently of its nuclear translocation and binding to IGFs. Acts itself as a growth factor that can act independently of IGFs to regulate bone formation. Acts as a ligand for the ROR1 receptor which triggers formation of ROR1/HER2 heterodimer to enhance CREB oncogenic signaling. This Sus scrofa (Pig) protein is Insulin-like growth factor-binding protein 5 (IGFBP5).